The chain runs to 85 residues: MAHKKAGGSTRNGRDSEAKRLGVKMYGGQVIKAGNIIVRQRGTQFHAGYGVGMGKDHTLFAKIEGVIKFEVKGAFGRRYVSVVAA.

Belongs to the bacterial ribosomal protein bL27 family.

In Pseudomonas fluorescens (strain ATCC BAA-477 / NRRL B-23932 / Pf-5), this protein is Large ribosomal subunit protein bL27.